The chain runs to 265 residues: Palmitoyltransferase ZDHHC21 (265 aa).

Topologically, residues 1-16 (MGLRIHFVVDPHGWCC) are cytoplasmic. The helical transmembrane segment at 17-37 (MGLIVFVWLYNIVLIPKIVLF) threads the bilayer. Residues 38–44 (PHYEEGH) are Extracellular-facing. A helical transmembrane segment spans residues 45–65 (IPGILIIIFYGISIFCLVALV). The Cytoplasmic portion of the chain corresponds to 66 to 133 (RASITDPGRL…NNCVGEDNHW (68 aa)). The 51-residue stretch at 90–140 (ELCNKCNLMRPKRSHHCSRCGHCVRRMDHHCPWINNCVGEDNHWLFLQLCF) folds into the DHHC domain. C120 serves as the catalytic S-palmitoyl cysteine intermediate. The helical transmembrane segment at 134 to 154 (LFLQLCFYTELLTCYALMFSF) threads the bilayer. Residues 155 to 185 (CHYYYFLPLKKRNLDLFVFRHELAIMRLAAF) are Extracellular-facing. A helical transmembrane segment spans residues 186 to 206 (MGITMLVGITGLFYTQLIGII). Residues 207–265 (TDTTSIEKMSNCCEDISRPRKPWQQTFSEVFGTRWKILWFIPFRQRQPLRVPYHFANHV) lie on the Cytoplasmic side of the membrane.

The protein belongs to the DHHC palmitoyltransferase family. As to expression, widely expressed.

The protein resides in the golgi apparatus membrane. Its subcellular location is the golgi apparatus. It localises to the cis-Golgi network membrane. The protein localises to the cell membrane. It catalyses the reaction L-cysteinyl-[protein] + hexadecanoyl-CoA = S-hexadecanoyl-L-cysteinyl-[protein] + CoA. Its function is as follows. Palmitoyltransferase that catalyzes the addition of palmitate onto various protein substrates. Palmitoylates sex steroid hormone receptors, including ESR1, PGR and AR, thereby regulating their targeting to the plasma membrane. This affects rapid intracellular signaling by sex hormones via ERK and AKT kinases and the generation of cAMP, but does not affect that mediated by their nuclear receptor. Palmitoylates FYN, regulates its localization in hair follicles and plays a key role in epidermal homeostasis and hair follicle differentiation. Through the palmitoylation of PLCB1 and the regulation of PLCB1 downstream signaling may indirectly regulate the function of the endothelial barrier and the adhesion of leukocytes to the endothelium. Also has a palmitoyltransferase activity toward ADRA1D, positively regulating its activity and expression and may thereby play a role in vascular contraction. May also palmitoylate eNOS and LCK. This Homo sapiens (Human) protein is Palmitoyltransferase ZDHHC21.